The following is a 582-amino-acid chain: Potassium-transporting ATPase potassium-binding subunit (582 aa).

Helical transmembrane passes span 11–31, 81–101, 148–168, 195–215, 272–292, 298–318, 379–399, 401–421, 439–459, and 551–571; these read AVFFTILAVLVFVAGEYLAWV, LKAVLVFNVCIWVLLFVVLMF, FGIGIAMFLTPATGLALMPAF, LLPISLLIAIILMAEGSVQTI, VLTLAMPIGTFSAIYAWGAWV, GVAIVAAFFVIYMALTGVAVV, ALGAFSLLFAFATNNISNGVG, GLLNILMFVILTAFIGALMIG, VFVVILVLPILVLIPQAAAVV, and GLLIGVIIIVSALVFLPALVF.

Belongs to the KdpA family. As to quaternary structure, the system is composed of three essential subunits: KdpA, KdpB and KdpC.

Its subcellular location is the cell membrane. Part of the high-affinity ATP-driven potassium transport (or Kdp) system, which catalyzes the hydrolysis of ATP coupled with the electrogenic transport of potassium into the cytoplasm. This subunit binds the extracellular potassium ions and delivers the ions to the membrane domain of KdpB through an intramembrane tunnel. The chain is Potassium-transporting ATPase potassium-binding subunit from Halobacterium salinarum (strain ATCC 700922 / JCM 11081 / NRC-1) (Halobacterium halobium).